The sequence spans 475 residues: Protein translocase subunit SecD (475 aa).

6 helical membrane passes run 7–27, 313–333, 338–358, 364–384, 410–430, and 437–457; these read LLITVTLLAFSVWALWPSLKF, KGFMSSLIGIVLVFLFMFIYY, LIADVALSLNLIILMAIMAYL, LPGVAGIALTLAMSVDANVLI, FWTIFDANFTTLIAALFLFQF, and GFAVTLSIGLIVSMFTAVTVT.

It belongs to the SecD/SecF family. SecD subfamily. As to quaternary structure, forms a complex with SecF. Part of the essential Sec protein translocation apparatus which comprises SecA, SecYEG and auxiliary proteins SecDF. Other proteins may also be involved.

It is found in the cell inner membrane. Part of the Sec protein translocase complex. Interacts with the SecYEG preprotein conducting channel. SecDF uses the proton motive force (PMF) to complete protein translocation after the ATP-dependent function of SecA. In Endomicrobium trichonymphae, this protein is Protein translocase subunit SecD.